The primary structure comprises 612 residues: Alpha-glycerophosphate oxidase (612 aa).

21 to 49 (DLLIIGGGITGAGVALQAAASGLDTGLIE) is an FAD binding site. Positions 399–408 (ETSTSEKELD) are enriched in basic and acidic residues. The tract at residues 399–418 (ETSTSEKELDPSAVSRGSSF) is disordered.

The protein belongs to the FAD-dependent glycerol-3-phosphate dehydrogenase family. FAD serves as cofactor.

The protein resides in the cytoplasm. The enzyme catalyses sn-glycerol 3-phosphate + O2 = dihydroxyacetone phosphate + H2O2. The sequence is that of Alpha-glycerophosphate oxidase (glpO) from Streptococcus pyogenes serotype M6 (strain ATCC BAA-946 / MGAS10394).